The sequence spans 735 residues: Catalase-peroxidase (735 aa).

Residues 1-10 (MMDGAQTNSG) show a composition bias toward polar residues. The interval 1–20 (MMDGAQTNSGGCPVMHGGGS) is disordered. A cross-link (tryptophyl-tyrosyl-methioninium (Trp-Tyr) (with M-254)) is located at residues 100–228 (WHSAGTYRTY…LAAVQMGLIY (129 aa)). The Proton acceptor role is filled by His101. A cross-link (tryptophyl-tyrosyl-methioninium (Tyr-Met) (with W-100)) is located at residues 228–254 (YVNPQGPDGNPDPLASAFDIRDTFARM). Residue His269 participates in heme b binding.

Belongs to the peroxidase family. Peroxidase/catalase subfamily. Homodimer or homotetramer. Heme b is required as a cofactor. In terms of processing, formation of the three residue Trp-Tyr-Met cross-link is important for the catalase, but not the peroxidase activity of the enzyme.

It catalyses the reaction H2O2 + AH2 = A + 2 H2O. It carries out the reaction 2 H2O2 = O2 + 2 H2O. Bifunctional enzyme with both catalase and broad-spectrum peroxidase activity. This Jannaschia sp. (strain CCS1) protein is Catalase-peroxidase.